A 71-amino-acid chain; its full sequence is Probable ribosome maturation protein RlbA (71 aa).

The S4 RNA-binding domain occupies 12-69 (ITLGQFLKLADVIQSGGMAKWFLSEHEVLVNDEPDNRRGRKLYVGDVVEIEGFGSFQV).

May assist in the assembly of the 50S subunit. The protein is Probable ribosome maturation protein RlbA of Bacillus subtilis (strain 168).